Reading from the N-terminus, the 297-residue chain is HTH-type transcriptional regulator ArgP (297 aa).

An HTH lysR-type domain is found at 4 to 60 (PDYRTLQALDAVIRERGFERAAQKLCITQSAVSQRIKQLENTFGQPLLVRTVPPRPT). The H-T-H motif DNA-binding region spans 21–40 (FERAAQKLCITQSAVSQRIK).

It belongs to the LysR transcriptional regulatory family. As to quaternary structure, homodimer.

Controls the transcription of genes involved in arginine and lysine metabolism. In Cronobacter sakazakii (strain ATCC BAA-894) (Enterobacter sakazakii), this protein is HTH-type transcriptional regulator ArgP.